Reading from the N-terminus, the 694-residue chain is Elongation factor G (694 aa).

The tr-type G domain maps to 8–282; the sequence is DRLRNIGIMA…AIVDYLPSPL (275 aa). GTP contacts are provided by residues 17-24, 81-85, and 135-138; these read AHIDAGKT, DTPGH, and NKMD. Residues 284–303 are disordered; that stretch reads IPPVQGTDPETGEPAERKAD.

This sequence belongs to the TRAFAC class translation factor GTPase superfamily. Classic translation factor GTPase family. EF-G/EF-2 subfamily.

The protein resides in the cytoplasm. Functionally, catalyzes the GTP-dependent ribosomal translocation step during translation elongation. During this step, the ribosome changes from the pre-translocational (PRE) to the post-translocational (POST) state as the newly formed A-site-bound peptidyl-tRNA and P-site-bound deacylated tRNA move to the P and E sites, respectively. Catalyzes the coordinated movement of the two tRNA molecules, the mRNA and conformational changes in the ribosome. This chain is Elongation factor G, found in Symbiobacterium thermophilum (strain DSM 24528 / JCM 14929 / IAM 14863 / T).